Reading from the N-terminus, the 74-residue chain is Ubiquitin-like protein FUBI (74 aa).

This sequence belongs to the ubiquitin family.

The protein is Ubiquitin-like protein FUBI (Fau) of Rattus norvegicus (Rat).